A 92-amino-acid polypeptide reads, in one-letter code: Small ribosomal subunit protein uS19 (92 aa).

It belongs to the universal ribosomal protein uS19 family.

Protein S19 forms a complex with S13 that binds strongly to the 16S ribosomal RNA. The polypeptide is Small ribosomal subunit protein uS19 (Prochlorococcus marinus (strain MIT 9301)).